The primary structure comprises 285 residues: Phosphatidylserine decarboxylase proenzyme (285 aa).

Catalysis depends on charge relay system; for autoendoproteolytic cleavage activity residues Asp-89, His-146, and Ser-252. The Schiff-base intermediate with substrate; via pyruvic acid; for decarboxylase activity role is filled by Ser-252. Ser-252 is subject to Pyruvic acid (Ser); by autocatalysis.

Belongs to the phosphatidylserine decarboxylase family. PSD-B subfamily. Prokaryotic type I sub-subfamily. In terms of assembly, heterodimer of a large membrane-associated beta subunit and a small pyruvoyl-containing alpha subunit. It depends on pyruvate as a cofactor. Is synthesized initially as an inactive proenzyme. Formation of the active enzyme involves a self-maturation process in which the active site pyruvoyl group is generated from an internal serine residue via an autocatalytic post-translational modification. Two non-identical subunits are generated from the proenzyme in this reaction, and the pyruvate is formed at the N-terminus of the alpha chain, which is derived from the carboxyl end of the proenzyme. The autoendoproteolytic cleavage occurs by a canonical serine protease mechanism, in which the side chain hydroxyl group of the serine supplies its oxygen atom to form the C-terminus of the beta chain, while the remainder of the serine residue undergoes an oxidative deamination to produce ammonia and the pyruvoyl prosthetic group on the alpha chain. During this reaction, the Ser that is part of the protease active site of the proenzyme becomes the pyruvoyl prosthetic group, which constitutes an essential element of the active site of the mature decarboxylase.

It is found in the cell membrane. The enzyme catalyses a 1,2-diacyl-sn-glycero-3-phospho-L-serine + H(+) = a 1,2-diacyl-sn-glycero-3-phosphoethanolamine + CO2. Its pathway is phospholipid metabolism; phosphatidylethanolamine biosynthesis; phosphatidylethanolamine from CDP-diacylglycerol: step 2/2. Catalyzes the formation of phosphatidylethanolamine (PtdEtn) from phosphatidylserine (PtdSer). In Vibrio campbellii (strain ATCC BAA-1116), this protein is Phosphatidylserine decarboxylase proenzyme.